A 192-amino-acid polypeptide reads, in one-letter code: Erythropoietin (192 aa).

Residues 1-26 (MGVPERPTLLLLLSLLLLPLGLPVLC) form the signal peptide. An intrachain disulfide couples Cys-33 to Cys-187. N-linked (GlcNAc...) asparagine glycosylation is found at Asn-50, Asn-64, and Asn-109.

Belongs to the EPO/TPO family. As to expression, produced by kidney or liver of adult mammals and by liver of fetal or neonatal mammals.

It localises to the secreted. Hormone involved in the regulation of erythrocyte proliferation and differentiation and the maintenance of a physiological level of circulating erythrocyte mass. Binds to EPOR leading to EPOR dimerization and JAK2 activation thereby activating specific downstream effectors, including STAT1 and STAT3. The polypeptide is Erythropoietin (EPO) (Alexandromys oeconomus (Tundra vole)).